A 51-amino-acid chain; its full sequence is rpoE leader peptide (51 aa).

A short protein whose stop codon overlaps with the start codon of downstream rpoE; a premature stop codon at position 12 results in decreased expression of ECF sigma factor RpoE, thus they are translationally coupled. This Escherichia coli (strain K12) protein is rpoE leader peptide.